Here is a 309-residue protein sequence, read N- to C-terminus: Eugenol synthase 2 (309 aa).

Residues 13–16 (TGYI), 35–45 (VRETTVSDPVK), R36, 86–88 (FMQ), 111–113 (SEF), K134, and 154–156 (NCF) each bind NADP(+). The active-site Proton donor/acceptor is the K134.

Belongs to the NmrA-type oxidoreductase family. Mostly expressed in petals, and, to a lower extent, in sepals, stamens and pistils.

It carries out the reaction eugenol + a carboxylate + NADP(+) = a coniferyl ester + NADPH. It catalyses the reaction eugenol + acetate + NADP(+) = (E)-coniferyl acetate + NADPH. It functions in the pathway aromatic compound metabolism; phenylpropanoid biosynthesis. Functionally, catalyzes the synthesis of the phenylpropene eugenol from coniferyl acetate. Phenylpropenes are produced by plants as defense compounds with antimicrobial and antianimal properties, or as floral attractants of pollinators. The chain is Eugenol synthase 2 from Clarkia breweri (Fairy fans).